Consider the following 307-residue polypeptide: Elongation factor Ts (307 aa).

The segment at 79–82 (TDFV) is involved in Mg(2+) ion dislocation from EF-Tu.

It belongs to the EF-Ts family.

Its subcellular location is the cytoplasm. Associates with the EF-Tu.GDP complex and induces the exchange of GDP to GTP. It remains bound to the aminoacyl-tRNA.EF-Tu.GTP complex up to the GTP hydrolysis stage on the ribosome. The chain is Elongation factor Ts from Rhizobium meliloti (strain 1021) (Ensifer meliloti).